The primary structure comprises 371 residues: tRNA-specific 2-thiouridylase MnmA (371 aa).

ATP contacts are provided by residues 14 to 21 (GMSGGVDS) and Met40. An interaction with target base in tRNA region spans residues 100-102 (NPD). Catalysis depends on Cys105, which acts as the Nucleophile. A disulfide bridge connects residues Cys105 and Cys205. Gly129 contributes to the ATP binding site. The interaction with tRNA stretch occupies residues 155–157 (KDQ). Cys205 serves as the catalytic Cysteine persulfide intermediate. Residues 321–322 (RY) are interaction with tRNA.

It belongs to the MnmA/TRMU family.

It localises to the cytoplasm. The catalysed reaction is S-sulfanyl-L-cysteinyl-[protein] + uridine(34) in tRNA + AH2 + ATP = 2-thiouridine(34) in tRNA + L-cysteinyl-[protein] + A + AMP + diphosphate + H(+). In terms of biological role, catalyzes the 2-thiolation of uridine at the wobble position (U34) of tRNA, leading to the formation of s(2)U34. The sequence is that of tRNA-specific 2-thiouridylase MnmA from Bordetella pertussis (strain Tohama I / ATCC BAA-589 / NCTC 13251).